The primary structure comprises 411 residues: Anaerobic nitric oxide reductase flavorubredoxin homolog (411 aa).

The interval 30–210 (LRGSSYNSYL…PFSRLVTPKI (181 aa)) is zinc metallo-hydrolase. Fe cation-binding residues include His-79, Glu-81, Asp-83, His-147, Asp-166, His-227, Cys-360, Cys-363, Cys-393, and Cys-396. One can recognise a Rubredoxin-like domain in the interval 355–406 (GPRMQCSVCQWIYDPAKGEPMQDVAPGTPWSEVPDNFLCPECSLGKDVFDEL).

In the N-terminal section; belongs to the zinc metallo-hydrolase group 3 family. In terms of assembly, homotetramer. Fe cation is required as a cofactor.

The protein localises to the cytoplasm. It functions in the pathway nitrogen metabolism; nitric oxide reduction. Functionally, anaerobic nitric oxide reductase; uses NADH to detoxify nitric oxide (NO), protecting several 4Fe-4S NO-sensitive enzymes. Has at least 2 reductase partners, only one of which (NorW, flavorubredoxin reductase) has been identified. NO probably binds to the di-iron center. Also able to function as an aerobic oxygen reductase. The chain is Anaerobic nitric oxide reductase flavorubredoxin homolog from Escherichia coli O157:H7.